The primary structure comprises 83 residues: MADNTVADVKKLSFERAIEELESIVKRLEDGKVPLEESVTIYERGEALKRRCEELLRQAEARVEKITTDASGRATGTAPLDVQ.

This sequence belongs to the XseB family. Heterooligomer composed of large and small subunits.

The protein resides in the cytoplasm. It catalyses the reaction Exonucleolytic cleavage in either 5'- to 3'- or 3'- to 5'-direction to yield nucleoside 5'-phosphates.. Its function is as follows. Bidirectionally degrades single-stranded DNA into large acid-insoluble oligonucleotides, which are then degraded further into small acid-soluble oligonucleotides. This Bradyrhizobium sp. (strain ORS 278) protein is Exodeoxyribonuclease 7 small subunit.